A 97-amino-acid chain; its full sequence is Small ribosomal subunit protein bS20 (97 aa).

It belongs to the bacterial ribosomal protein bS20 family.

Its function is as follows. Binds directly to 16S ribosomal RNA. This Gloeothece citriformis (strain PCC 7424) (Cyanothece sp. (strain PCC 7424)) protein is Small ribosomal subunit protein bS20.